An 89-amino-acid polypeptide reads, in one-letter code: Small ribosomal subunit protein uS15 (89 aa).

This sequence belongs to the universal ribosomal protein uS15 family. In terms of assembly, part of the 30S ribosomal subunit. Forms a bridge to the 50S subunit in the 70S ribosome, contacting the 23S rRNA.

Its function is as follows. One of the primary rRNA binding proteins, it binds directly to 16S rRNA where it helps nucleate assembly of the platform of the 30S subunit by binding and bridging several RNA helices of the 16S rRNA. Forms an intersubunit bridge (bridge B4) with the 23S rRNA of the 50S subunit in the ribosome. This chain is Small ribosomal subunit protein uS15, found in Parafrankia sp. (strain EAN1pec).